A 291-amino-acid chain; its full sequence is Phosphoribulokinase (291 aa).

12-20 (GSSGAGTTS) lines the ATP pocket.

It belongs to the phosphoribulokinase family. In terms of assembly, homooctamer.

It carries out the reaction D-ribulose 5-phosphate + ATP = D-ribulose 1,5-bisphosphate + ADP + H(+). Its pathway is carbohydrate biosynthesis; Calvin cycle. This Xanthobacter flavus protein is Phosphoribulokinase (cbbP).